We begin with the raw amino-acid sequence, 423 residues long: Glucose-1-phosphate adenylyltransferase (423 aa).

Alpha-D-glucose 1-phosphate contacts are provided by residues Tyr107, Gly172, 187–188 (EK), and Ser205.

Belongs to the bacterial/plant glucose-1-phosphate adenylyltransferase family. Homotetramer.

The enzyme catalyses alpha-D-glucose 1-phosphate + ATP + H(+) = ADP-alpha-D-glucose + diphosphate. The protein operates within glycan biosynthesis; glycogen biosynthesis. Involved in the biosynthesis of ADP-glucose, a building block required for the elongation reactions to produce glycogen. Catalyzes the reaction between ATP and alpha-D-glucose 1-phosphate (G1P) to produce pyrophosphate and ADP-Glc. In Cereibacter sphaeroides (strain ATCC 17025 / ATH 2.4.3) (Rhodobacter sphaeroides), this protein is Glucose-1-phosphate adenylyltransferase.